A 64-amino-acid chain; its full sequence is Large ribosomal subunit protein bL35 (64 aa).

Basic residues-rich tracts occupy residues 1 to 26 (MPKM…KRSK) and 33 to 44 (LTKKSPKRKRKL). Residues 1–44 (MPKMKTHRGAAKRFKKTGTGKIKRSKAYTSHILTKKSPKRKRKL) are disordered.

Belongs to the bacterial ribosomal protein bL35 family.

The protein is Large ribosomal subunit protein bL35 of Alkaliphilus oremlandii (strain OhILAs) (Clostridium oremlandii (strain OhILAs)).